Reading from the N-terminus, the 135-residue chain is Transcriptional regulator HosA (135 aa).

Residues 4–134 form the HTH marR-type domain; it reads RNKAFHQLRQ…FVQLVRKMMN (131 aa). The segment at residues 48-71 is a DNA-binding region (H-T-H motif); the sequence is QVALIEAAVSTKATLAEMLARMEN.

Its function is as follows. Involved in the temperature-dependent positive control of flagellum-driven swimming motility and cellular aggregation. Regulates fliC expression by directly interacting with fliC promoter. This is Transcriptional regulator HosA (hosA) from Escherichia coli O157:H7.